Reading from the N-terminus, the 693-residue chain is Polyribonucleotide nucleotidyltransferase (693 aa).

Residues D489 and D495 each coordinate Mg(2+). Residues 556–615 (PQIHVMNINPAKIKDVVGRGGATVKGIVEKTGAQIDTSDSGEVKVFAKDKKSMDMAVAMI) form the KH domain. Residues 625–693 (GQVYKGKIVK…GRVKLSLVAR (69 aa)) enclose the S1 motif domain.

Belongs to the polyribonucleotide nucleotidyltransferase family. In terms of assembly, component of the RNA degradosome, which is a multiprotein complex involved in RNA processing and mRNA degradation. Requires Mg(2+) as cofactor.

It is found in the cytoplasm. It catalyses the reaction RNA(n+1) + phosphate = RNA(n) + a ribonucleoside 5'-diphosphate. Functionally, involved in mRNA degradation. Catalyzes the phosphorolysis of single-stranded polyribonucleotides processively in the 3'- to 5'-direction. In Francisella tularensis subsp. holarctica (strain OSU18), this protein is Polyribonucleotide nucleotidyltransferase.